Consider the following 239-residue polypeptide: Probable transcriptional regulatory protein BCQ_0605 (239 aa).

Belongs to the TACO1 family. YeeN subfamily.

The protein localises to the cytoplasm. The protein is Probable transcriptional regulatory protein BCQ_0605 of Bacillus cereus (strain Q1).